The chain runs to 480 residues: Sestrin-2 (480 aa).

Met-1 bears the N-acetylmethionine mark. The tract at residues 20-45 (PGGVGDSGPGEEQRESRARRGPRGPS) is disordered. The interval 66 to 239 (GLEALMSSGR…APTPPSEQSS (174 aa)) is N-terminal domain; mediates the alkylhydroperoxide reductase activity. Catalysis depends on Cys-125, which acts as the Cysteine sulfenic acid (-SOH) intermediate. Residue Lys-175 forms a Glycyl lysine isopeptide (Lys-Gly) (interchain with G-Cter in ubiquitin) linkage. A disordered region spans residues 222-252 (ADGSPAPQAPTPPSEQSSPPSRDPLNNSGGF). Position 249 is a phosphoserine (Ser-249). The tract at residues 308 to 480 (PHPDMLCFVE…ALRAITRYMT (173 aa)) is C-terminal domain; mediates TORC1 regulation. Residues 374-377 (TYNT), Thr-386, and Glu-451 each bind L-leucine.

This sequence belongs to the sestrin family. Interacts with the GATOR2 complex which is composed of MIOS, SEC13, SEH1L, WDR24 and WDR59; the interaction is negatively regulated by leucine. Conveys leucine availability via direct interaction with SEH1L and WDR24 components of the GATOR2 complex. Interacts with RRAGA, RRAGB, RRAGC and RRAGD; may function as a guanine nucleotide dissociation inhibitor for RRAGs and regulate them. May interact with the TORC2 complex. Interacts with KEAP1, RBX1, SQSTM and ULK1; to regulate the degradation of KEAP1. May also associate with the complex composed of TSC1, TSC2 and the AMP-responsive protein kinase/AMPK to regulate TORC1 signaling. May interact with PRDX1. In terms of processing, phosphorylated by ULK1 at multiple sites. Post-translationally, ubiquitinated at Lys-175 by RNF167 via 'Lys-63'-linked polyubiquitination in response to leucine deprivation: ubiquitination promotes SESN2-interaction with the GATOR2 complex, leading to inhibit the TORC1 signaling pathway. Deubiquitinated at Lys-175 by STAMBPL1, promoting the TORC1 signaling pathway. Ubiquitinated by RNF186; ubiquitination mediates proteasomal degradation.

The protein localises to the cytoplasm. The catalysed reaction is a hydroperoxide + L-cysteinyl-[protein] = S-hydroxy-L-cysteinyl-[protein] + an alcohol. Functions as an intracellular leucine sensor that negatively regulates the mTORC1 signaling pathway through the GATOR complex. In absence of leucine, binds the GATOR subcomplex GATOR2 and prevents mTORC1 signaling. Binding of leucine to SESN2 disrupts its interaction with GATOR2 thereby activating the TORC1 signaling pathway. This stress-inducible metabolic regulator also plays a role in protection against oxidative and genotoxic stresses. May negatively regulate protein translation in response to endoplasmic reticulum stress, via mTORC1. May positively regulate the transcription by NFE2L2 of genes involved in the response to oxidative stress by facilitating the SQSTM1-mediated autophagic degradation of KEAP1. May also mediate TP53 inhibition of TORC1 signaling upon genotoxic stress. Moreover, may prevent the accumulation of reactive oxygen species (ROS) through the alkylhydroperoxide reductase activity born by the N-terminal domain of the protein. Was originally reported to contribute to oxidative stress resistance by reducing PRDX1. However, this could not be confirmed. The chain is Sestrin-2 from Pongo abelii (Sumatran orangutan).